Reading from the N-terminus, the 455-residue chain is Chromosomal replication initiator protein DnaA (455 aa).

The tract at residues 1–82 is domain I, interacts with DnaA modulators; that stretch reads MNRNTSSLWA…NPDFVVKLVE (82 aa). The segment at 82–117 is domain II; the sequence is EGVKPAPKQNNIVTTKQNAETAVDSEQHLQSVEFKT. The segment at 118-335 is domain III, AAA+ region; the sequence is GLNSNHLFEN…GALNRVIANA (218 aa). ATP-binding residues include Gly163, Gly165, Lys166, and Thr167. Residues 336–455 form a domain IV, binds dsDNA region; sequence EFTGKTITID…WSNLIRTLSA (120 aa).

Belongs to the DnaA family. In terms of assembly, oligomerizes as a right-handed, spiral filament on DNA at oriC.

The protein localises to the cytoplasm. In terms of biological role, plays an essential role in the initiation and regulation of chromosomal replication. ATP-DnaA binds to the origin of replication (oriC) to initiate formation of the DNA replication initiation complex once per cell cycle. Binds the DnaA box (a 9 base pair repeat at the origin) and separates the double-stranded (ds)DNA. Forms a right-handed helical filament on oriC DNA; dsDNA binds to the exterior of the filament while single-stranded (ss)DNA is stabiized in the filament's interior. The ATP-DnaA-oriC complex binds and stabilizes one strand of the AT-rich DNA unwinding element (DUE), permitting loading of DNA polymerase. After initiation quickly degrades to an ADP-DnaA complex that is not apt for DNA replication. Binds acidic phospholipids. This is Chromosomal replication initiator protein DnaA from Actinobacillus succinogenes (strain ATCC 55618 / DSM 22257 / CCUG 43843 / 130Z).